A 281-amino-acid chain; its full sequence is DegV domain-containing protein (281 aa).

The DegV domain maps to 3–280 (WKIVSDSGCD…EGGLLMGYEI (278 aa)). Positions 63 and 91 each coordinate hexadecanoate.

Functionally, may bind long-chain fatty acids, such as palmitate, and may play a role in lipid transport or fatty acid metabolism. The sequence is that of DegV domain-containing protein from Streptococcus gordonii.